Consider the following 1044-residue polypeptide: Translation initiation factor IF-2 (1044 aa).

Residues Val-31 to Glu-425 form a disordered region. Composition is skewed to pro residues over residues Gly-77–Ala-98 and Ala-106–Ala-116. Over residues Glu-117–Ala-148 the composition is skewed to low complexity. Over residues Gly-168–Ala-185 the composition is skewed to gly residues. Positions Gly-204–Gly-247 are enriched in basic and acidic residues. Residues Gly-285–Pro-304 show a composition bias toward low complexity. The span at Gln-305 to Gly-328 shows a compositional bias: pro residues. Low complexity predominate over residues Met-329–Arg-338. Residues Pro-339–Gly-409 are compositionally biased toward gly residues. Basic residues predominate over residues Val-413 to Lys-422. Residues Ala-537–Asp-709 form the tr-type G domain. The tract at residues Gly-546–Thr-553 is G1. Gly-546 to Thr-553 is a binding site for GTP. Positions Gly-571–His-575 are G2. Residues Asp-596 to Gly-599 form a G3 region. Residues Asp-596 to His-600 and Asn-650 to Asp-653 each bind GTP. Positions Asn-650–Asp-653 are G4. A G5 region spans residues Ser-686–Arg-688.

This sequence belongs to the TRAFAC class translation factor GTPase superfamily. Classic translation factor GTPase family. IF-2 subfamily.

It localises to the cytoplasm. One of the essential components for the initiation of protein synthesis. Protects formylmethionyl-tRNA from spontaneous hydrolysis and promotes its binding to the 30S ribosomal subunits. Also involved in the hydrolysis of GTP during the formation of the 70S ribosomal complex. The chain is Translation initiation factor IF-2 from Kineococcus radiotolerans (strain ATCC BAA-149 / DSM 14245 / SRS30216).